Consider the following 192-residue polypeptide: 3-hydroxyanthranilate 3,4-dioxygenase 1 (192 aa).

Arginine 50 provides a ligand contact to O2. 3 residues coordinate Fe cation: histidine 54, glutamate 60, and histidine 102. Glutamate 60 lines the substrate pocket. Substrate is bound by residues arginine 106 and glutamate 116. Positions 131, 134, 168, and 171 each coordinate a divalent metal cation.

Belongs to the 3-HAO family. It depends on Fe(2+) as a cofactor.

It is found in the cytoplasm. It catalyses the reaction 3-hydroxyanthranilate + O2 = (2Z,4Z)-2-amino-3-carboxymuconate 6-semialdehyde. It participates in cofactor biosynthesis; NAD(+) biosynthesis; quinolinate from L-kynurenine: step 3/3. Catalyzes the oxidative ring opening of 3-hydroxyanthranilate to 2-amino-3-carboxymuconate semialdehyde, which spontaneously cyclizes to quinolinate. The sequence is that of 3-hydroxyanthranilate 3,4-dioxygenase 1 (bna1-1) from Aspergillus clavatus (strain ATCC 1007 / CBS 513.65 / DSM 816 / NCTC 3887 / NRRL 1 / QM 1276 / 107).